Consider the following 373-residue polypeptide: LIM domain-binding protein 1 (373 aa).

2 disordered regions span residues 248-297 (PPAE…LSSQ) and 329-373 (DAAN…QASQ). The span at 266–282 (SGGSTMSSGGGNTNNSN) shows a compositional bias: low complexity. The segment covering 288-297 (PASTFALSSQ) has biased composition (polar residues). The LIM interaction domain (LID) domain maps to 298–337 (DVMVVGEPTLMGGEFGDEDERLITRLENTQFDAANGIDDE).

The protein belongs to the LDB family. As to quaternary structure, forms homodimers and heterodimers. Interacts with and activates lhx1/lim1. The stoichiometry of lhx1/lim1 and ldb1 is important for their function and an excess of ldb1 can inhibit lhx1/lim1 function. When bound to lhx1/lim1, escapes degradation by rnf12. Interacts with the N-terminal region of rnf12. Post-translationally, undergoes rnf12-mediated ubiquitin-proteasome-dependent degradation.

The protein resides in the nucleus. Its function is as follows. Binds to the LIM domain of a wide variety of LIM domain-containing transcription factors. Acts as a coactivator together with otx2 to stimulate lhx1/lim1-mediated activation of the gsc promoter in the Spemann organizer. Acts synergistically with lhx1/lim1 and ssbp in axis formation. The chain is LIM domain-binding protein 1 from Xenopus tropicalis (Western clawed frog).